Here is a 348-residue protein sequence, read N- to C-terminus: D-erythrose-4-phosphate dehydrogenase (348 aa).

Residues 12 to 13 (RI) and Arg81 contribute to the NAD(+) site. Substrate contacts are provided by residues 154–156 (SCT), Arg200, 213–214 (TK), and Arg236. Cys155 functions as the Nucleophile in the catalytic mechanism. Asn318 is an NAD(+) binding site.

Belongs to the glyceraldehyde-3-phosphate dehydrogenase family. Epd subfamily. As to quaternary structure, homotetramer.

The protein resides in the cytoplasm. It catalyses the reaction D-erythrose 4-phosphate + NAD(+) + H2O = 4-phospho-D-erythronate + NADH + 2 H(+). The protein operates within cofactor biosynthesis; pyridoxine 5'-phosphate biosynthesis; pyridoxine 5'-phosphate from D-erythrose 4-phosphate: step 1/5. In terms of biological role, catalyzes the NAD-dependent conversion of D-erythrose 4-phosphate to 4-phosphoerythronate. The polypeptide is D-erythrose-4-phosphate dehydrogenase (Salmonella dublin (strain CT_02021853)).